We begin with the raw amino-acid sequence, 407 residues long: Argininosuccinate synthase (407 aa).

ATP contacts are provided by residues 11–19 and Ala39; that span reads AYSGGLDTS. Residues Tyr90 and Ser95 each contribute to the L-citrulline site. Residue Gly120 participates in ATP binding. 3 residues coordinate L-aspartate: Thr122, Asn126, and Asp127. L-citrulline is bound at residue Asn126. The L-citrulline site is built by Arg130, Ser179, Ser188, Glu264, and Tyr276.

The protein belongs to the argininosuccinate synthase family. Type 1 subfamily. In terms of assembly, homotetramer.

It localises to the cytoplasm. The enzyme catalyses L-citrulline + L-aspartate + ATP = 2-(N(omega)-L-arginino)succinate + AMP + diphosphate + H(+). Its pathway is amino-acid biosynthesis; L-arginine biosynthesis; L-arginine from L-ornithine and carbamoyl phosphate: step 2/3. This Roseiflexus sp. (strain RS-1) protein is Argininosuccinate synthase.